Here is a 407-residue protein sequence, read N- to C-terminus: Phosphopentomutase (407 aa).

Residues Asp10, Asp306, His311, Asp347, His348, and His359 each contribute to the Mn(2+) site.

It belongs to the phosphopentomutase family. Mn(2+) is required as a cofactor.

It is found in the cytoplasm. The catalysed reaction is 2-deoxy-alpha-D-ribose 1-phosphate = 2-deoxy-D-ribose 5-phosphate. It carries out the reaction alpha-D-ribose 1-phosphate = D-ribose 5-phosphate. Its pathway is carbohydrate degradation; 2-deoxy-D-ribose 1-phosphate degradation; D-glyceraldehyde 3-phosphate and acetaldehyde from 2-deoxy-alpha-D-ribose 1-phosphate: step 1/2. Its function is as follows. Isomerase that catalyzes the conversion of deoxy-ribose 1-phosphate (dRib-1-P) and ribose 1-phosphate (Rib-1-P) to deoxy-ribose 5-phosphate (dRib-5-P) and ribose 5-phosphate (Rib-5-P), respectively. This chain is Phosphopentomutase, found in Salmonella paratyphi C (strain RKS4594).